The chain runs to 385 residues: Cell division protein FtsZ (385 aa).

GTP is bound by residues 37–41 (GGGSN), 125–127 (GTG), E156, K160, and D204.

The protein belongs to the FtsZ family. As to quaternary structure, homodimer. Polymerizes to form a dynamic ring structure in a strictly GTP-dependent manner. Interacts directly with several other division proteins.

The protein localises to the cytoplasm. Its function is as follows. Essential cell division protein that forms a contractile ring structure (Z ring) at the future cell division site. The regulation of the ring assembly controls the timing and the location of cell division. One of the functions of the FtsZ ring is to recruit other cell division proteins to the septum to produce a new cell wall between the dividing cells. Binds GTP and shows GTPase activity. In Helicobacter pylori (strain ATCC 700392 / 26695) (Campylobacter pylori), this protein is Cell division protein FtsZ.